Reading from the N-terminus, the 351-residue chain is uncharacterized protein (351 aa).

Mn(2+) contacts are provided by Asp-215, Asp-226, His-290, Glu-319, and Glu-333.

The protein belongs to the peptidase M24B family. It depends on Mn(2+) as a cofactor.

This is an uncharacterized protein from Staphylococcus epidermidis (strain ATCC 35984 / DSM 28319 / BCRC 17069 / CCUG 31568 / BM 3577 / RP62A).